A 497-amino-acid chain; its full sequence is Guanosine-5'-triphosphate,3'-diphosphate pyrophosphatase (497 aa).

Belongs to the GppA/Ppx family. GppA subfamily.

The catalysed reaction is guanosine 3'-diphosphate 5'-triphosphate + H2O = guanosine 3',5'-bis(diphosphate) + phosphate + H(+). Its pathway is purine metabolism; ppGpp biosynthesis; ppGpp from GTP: step 2/2. Catalyzes the conversion of pppGpp to ppGpp. Guanosine pentaphosphate (pppGpp) is a cytoplasmic signaling molecule which together with ppGpp controls the 'stringent response', an adaptive process that allows bacteria to respond to amino acid starvation, resulting in the coordinated regulation of numerous cellular activities. The protein is Guanosine-5'-triphosphate,3'-diphosphate pyrophosphatase of Vibrio atlanticus (strain LGP32) (Vibrio splendidus (strain Mel32)).